The sequence spans 416 residues: Enterobactin exporter EntS (416 aa).

At 1-21 (MNKQSWLLNLSLLKTHPAFRA) the chain is on the cytoplasmic side. Residues 22-42 (VFLARFISIVSLGLLGVAVPV) form a helical membrane-spanning segment. The Periplasmic segment spans residues 43 to 55 (QIQMMTHSTWQVG). A helical membrane pass occupies residues 56–76 (LSVTLTGGAMFVGLMVGGVLA). The Cytoplasmic segment spans residues 77–83 (DRYERKK). The helical transmembrane segment at 84 to 104 (VILLARGTCGIGFIGLCLNAL) threads the bilayer. Residues 105–109 (LPEPS) lie on the Periplasmic side of the membrane. Residues 110–130 (LLAIYLLGLWDGFFASLGVTA) traverse the membrane as a helical segment. Over 131–156 (LLAATPALVGRENLMQAGAITMLTVR) the chain is Cytoplasmic. Residues 157-177 (LGSVISPMIGGLLLATGGVAW) form a helical membrane-spanning segment. Position 178 (Asn-178) is a topological domain, periplasmic. Residues 179–199 (YGLAAAGTFITLLPLLSLPAL) form a helical membrane-spanning segment. Residues 200-218 (PPPPQPREHPLKSLLAGFR) lie on the Cytoplasmic side of the membrane. A helical transmembrane segment spans residues 219-239 (FLLASPLVGGIALLGGLLTMA). Residues 240–256 (SAVRVLYPALADNWQMS) lie on the Periplasmic side of the membrane. A helical membrane pass occupies residues 257–277 (AAQIGFLYAAIPLGAAIGALT). At 278 to 287 (SGKLAHSARP) the chain is on the cytoplasmic side. A helical transmembrane segment spans residues 288–307 (GLLMLLSTLGSFLAIGLFGL). Residues 308–313 (MPMWIL) lie on the Periplasmic side of the membrane. A helical membrane pass occupies residues 314–336 (GVVCLALFGWLSAVSSLLQYTML). The Cytoplasmic segment spans residues 337–356 (QTQTPEAMLGRINGLWTAQN). The helical transmembrane segment at 357–377 (VTGDAIGAALLGGLGAMMTPV) threads the bilayer. A topological domain (periplasmic) is located at residue Ala-378. A helical transmembrane segment spans residues 379–399 (SASASGFGLLIIGVLLLLVLV). Residues 400–416 (ELRRFRQTPPQVTASDS) lie on the Cytoplasmic side of the membrane.

Belongs to the major facilitator superfamily. EntS (TC 2.A.1.38) family.

The protein localises to the cell inner membrane. In terms of biological role, component of an export pathway for enterobactin. The sequence is that of Enterobactin exporter EntS from Escherichia coli (strain 55989 / EAEC).